The following is a 574-amino-acid chain: Isocitrate dehydrogenase kinase/phosphatase (574 aa).

Residues 311–317 (APGIRGM) and K332 each bind ATP. D367 is a catalytic residue.

Belongs to the AceK family.

The protein localises to the cytoplasm. It carries out the reaction L-seryl-[isocitrate dehydrogenase] + ATP = O-phospho-L-seryl-[isocitrate dehydrogenase] + ADP + H(+). Functionally, bifunctional enzyme which can phosphorylate or dephosphorylate isocitrate dehydrogenase (IDH) on a specific serine residue. This is a regulatory mechanism which enables bacteria to bypass the Krebs cycle via the glyoxylate shunt in response to the source of carbon. When bacteria are grown on glucose, IDH is fully active and unphosphorylated, but when grown on acetate or ethanol, the activity of IDH declines drastically concomitant with its phosphorylation. This is Isocitrate dehydrogenase kinase/phosphatase from Shigella boydii serotype 4 (strain Sb227).